We begin with the raw amino-acid sequence, 497 residues long: Probable malate:quinone oxidoreductase (497 aa).

The protein belongs to the MQO family. The cofactor is FAD.

The catalysed reaction is (S)-malate + a quinone = a quinol + oxaloacetate. The protein operates within carbohydrate metabolism; tricarboxylic acid cycle; oxaloacetate from (S)-malate (quinone route): step 1/1. The sequence is that of Probable malate:quinone oxidoreductase from Rhodopseudomonas palustris (strain ATCC BAA-98 / CGA009).